The following is a 319-amino-acid chain: Ferrochelatase (319 aa).

Residues His194 and Glu275 each coordinate Fe cation.

The protein belongs to the ferrochelatase family.

The protein localises to the cytoplasm. It catalyses the reaction heme b + 2 H(+) = protoporphyrin IX + Fe(2+). Its pathway is porphyrin-containing compound metabolism; protoheme biosynthesis; protoheme from protoporphyrin-IX: step 1/1. In terms of biological role, catalyzes the ferrous insertion into protoporphyrin IX. The protein is Ferrochelatase of Hamiltonella defensa subsp. Acyrthosiphon pisum (strain 5AT).